We begin with the raw amino-acid sequence, 120 residues long: UPF0102 protein CbuK_0265 (120 aa).

The protein belongs to the UPF0102 family.

This is UPF0102 protein CbuK_0265 from Coxiella burnetii (strain CbuK_Q154) (Coxiella burnetii (strain Q154)).